The chain runs to 838 residues: G-protein coupled receptor-associated sorting protein 2 (838 aa).

Disordered regions lie at residues 1-121 (MTGA…PGAR), 218-293 (ASNE…NPFS), and 531-552 (LELS…PSPE). Positions 13–31 (KPEKKAGEEVVAGPEREND) are enriched in basic and acidic residues. Positions 220–235 (NESGFWSADETSTASS) are enriched in polar residues. The segment covering 255–271 (RSRHRAKHQTNPRSRPR) has biased composition (basic residues). Phosphoserine is present on residues Ser282 and Ser284. Positions 542–552 (SLLQPDQPSPE) are enriched in polar residues.

It belongs to the GPRASP family. In terms of assembly, interacts with cytoplasmic tails of a variety of G protein-coupled receptors such as muscarinic acetylcholine receptor M1/CHRM1 and calcitonin receptor/CALCR.

In terms of biological role, may play a role in regulation of a variety of G-protein coupled receptors. This chain is G-protein coupled receptor-associated sorting protein 2 (GPRASP2), found in Pongo abelii (Sumatran orangutan).